Consider the following 362-residue polypeptide: Putative protein ARB2BP (362 aa).

Residues I229 to L245 form a helical membrane-spanning segment.

Belongs to the ARB2 family.

It localises to the membrane. This is Putative protein ARB2BP from Homo sapiens (Human).